The sequence spans 588 residues: Mitochondrial tRNA methylthiotransferase CDK5RAP1 (588 aa).

A mitochondrion-targeting transit peptide spans Met1 to Ala30. Disordered stretches follow at residues Ser33–Phe53 and Ala70–Gly91. An MTTase N-terminal domain is found at Arg99 to Ser219. [4Fe-4S] cluster contacts are provided by Cys108, Cys144, Cys182, Cys257, Cys261, and Cys264. The region spanning Ser243–Ala498 is the Radical SAM core domain. Positions Lys500–Cys575 constitute a TRAM domain.

This sequence belongs to the methylthiotransferase family. MiaB subfamily. In terms of assembly, interacts with CDK5R1 (p35 form). CDK5RAP1, CDK5RAP2 and CDK5RAP3 show competitive binding to CDK5R1. Probably forms a complex with CDK5R1 and CDK5. [4Fe-4S] cluster serves as cofactor. In terms of tissue distribution, expressed in brain, liver, skeletal muscle and heart.

The protein localises to the mitochondrion. It catalyses the reaction N(6)-dimethylallyladenosine(37) in tRNA + (sulfur carrier)-SH + AH2 + 2 S-adenosyl-L-methionine = 2-methylsulfanyl-N(6)-dimethylallyladenosine(37) in tRNA + (sulfur carrier)-H + 5'-deoxyadenosine + L-methionine + A + S-adenosyl-L-homocysteine + 2 H(+). Its function is as follows. Methylthiotransferase that catalyzes the conversion of N6-(dimethylallyl)adenosine (i(6)A) to 2-methylthio-N6-(dimethylallyl)adenosine (ms(2)i(6)A) at position 37 (adjacent to the 3'-end of the anticodon) of four mitochondrial DNA-encoded tRNAs (Ser(UCN), Phe, Tyr and Trp). Essential for efficient and highly accurate protein translation by the ribosome. Specifically inhibits CDK5 activation by CDK5R1. Essential for efficient mitochondrial protein synthesis and respiratory chain. The sequence is that of Mitochondrial tRNA methylthiotransferase CDK5RAP1 from Mus musculus (Mouse).